A 155-amino-acid polypeptide reads, in one-letter code: MSRRGTAEEKTAKSDPIYRNRLVNMLVNRILKHGKKSLAYQILYRAVKKIQQKTETNPLSVLRQAIRGVTPDIAVKARRVGGSTHQVPIEIGSTQGKALAIRWLLAASRKRPGRNMAFKLSSELVDAAKGSGDAIRKKEETHRMAEANRAFAHFR.

The protein belongs to the universal ribosomal protein uS7 family. In terms of assembly, part of the 30S ribosomal subunit.

The protein localises to the plastid. It is found in the chloroplast. In terms of biological role, one of the primary rRNA binding proteins, it binds directly to 16S rRNA where it nucleates assembly of the head domain of the 30S subunit. In Cornus mas (Cornelian cherry dogwood), this protein is Small ribosomal subunit protein uS7c (rps7).